The following is a 365-amino-acid chain: Patr class I histocompatibility antigen, A-108 alpha chain (365 aa).

The signal sequence occupies residues 1–24 (MAVMPPRTLLLLLSGALALTQTWA). Residues 25 to 114 (GSHSMRYFYT…LRGYYNQSED (90 aa)) are alpha-1. Over 25–308 (GSHSMRYFYT…EPSSQPTIPI (284 aa)) the chain is Extracellular. An N-linked (GlcNAc...) asparagine glycan is attached at N110. Residues 115-206 (GSHTIQIMYG…ENGKETLQRT (92 aa)) are alpha-2. Disulfide bonds link C125–C188 and C227–C283. An alpha-3 region spans residues 207-298 (DPPKTHMTHH…GLPKPLTLRW (92 aa)). The 87-residue stretch at 209–295 (PKTHMTHHPI…QHEGLPKPLT (87 aa)) folds into the Ig-like C1-type domain. The interval 299 to 308 (EPSSQPTIPI) is connecting peptide. Residues 309-332 (VGIIAGLVLLGAVITGAVVAAVMW) form a helical membrane-spanning segment. At 333-365 (RRKSSDRKGGSYTQAASSDSAQGSDVSLTACKV) the chain is on the cytoplasmic side. The interval 339-360 (RKGGSYTQAASSDSAQGSDVSL) is disordered. A Phosphoserine modification is found at S343. At Y344 the chain carries Phosphotyrosine. The segment covering 346 to 359 (QAASSDSAQGSDVS) has biased composition (low complexity). Phosphoserine occurs at positions 349, 350, 352, 356, and 359.

Belongs to the MHC class I family. As to quaternary structure, heterodimer of an alpha chain and a beta chain (beta-2-microglobulin).

It is found in the membrane. In terms of biological role, involved in the presentation of foreign antigens to the immune system. The sequence is that of Patr class I histocompatibility antigen, A-108 alpha chain (Patr-A) from Pan troglodytes (Chimpanzee).